We begin with the raw amino-acid sequence, 638 residues long: Neuroendocrine convertase 2 (638 aa).

The signal sequence occupies residues 1–25 (MKGGCVSQWKAAAGFLFCVMVFASA). Residues 26–109 (ERPVFTNHFL…QQEGFDRKKR (84 aa)) constitute a propeptide that is removed on maturation. The Peptidase S8 domain maps to 129–453 (QWYLINTGQA…YGVLDAGAMV (325 aa)). Residues Asp-167 and His-208 each act as charge relay system in the active site. 2 disulfide bridges follow: Cys-225–Cys-376 and Cys-317–Cys-347. N-linked (GlcNAc...) asparagine glycosylation is present at Asn-375. Ser-384 serves as the catalytic Charge relay system. Positions 461 to 597 (TVPERFHCVG…TLMLHGTQSA (137 aa)) constitute a P/Homo B domain. Cysteines 468 and 494 form a disulfide. 2 N-linked (GlcNAc...) asparagine glycosylation sites follow: Asn-514 and Asn-524.

Belongs to the peptidase S8 family. Furin subfamily.

The protein localises to the cytoplasmic vesicle. It localises to the secretory vesicle. Its subcellular location is the secreted. The enzyme catalyses Release of protein hormones and neuropeptides from their precursors, generally by hydrolysis of -Lys-Arg-|- bonds.. Functionally, serine endopeptidase which is involved in the processing of hormone and other protein precursors at sites comprised of pairs of basic amino acid residues. Responsible for the release of glucagon from proglucagon in pancreatic A cells. The protein is Neuroendocrine convertase 2 (PCSK2) of Pongo abelii (Sumatran orangutan).